The primary structure comprises 370 residues: Developmentally-regulated GTP-binding protein 1 homolog (370 aa).

Residues 65-292 enclose the OBG-type G domain; sequence ARVGLIGFPS…LLDKIWEYLK (228 aa). GTP contacts are provided by residues 71–78, 117–121, and 250–253; these read GFPSVGKS, DLPGI, and NKID. The region spanning 292-369 is the TGS domain; that stretch reads KLIRVYTKPK…ADEDIVQIVK (78 aa).

The protein belongs to the TRAFAC class OBG-HflX-like GTPase superfamily. OBG GTPase family.

The chain is Developmentally-regulated GTP-binding protein 1 homolog (drg1) from Dictyostelium discoideum (Social amoeba).